We begin with the raw amino-acid sequence, 142 residues long: Ribosome maturation factor RimP (142 aa).

This sequence belongs to the RimP family.

The protein localises to the cytoplasm. In terms of biological role, required for maturation of 30S ribosomal subunits. This chain is Ribosome maturation factor RimP, found in Nitratiruptor sp. (strain SB155-2).